Here is a 355-residue protein sequence, read N- to C-terminus: Putative early 40.3 kDa protein (355 aa).

Its function is as follows. This protein is required for viral late gene expression. This is Putative early 40.3 kDa protein (DA41) from Orgyia pseudotsugata multicapsid polyhedrosis virus (OpMNPV).